Consider the following 407-residue polypeptide: Protein arginine N-methyltransferase 2 (407 aa).

Residues 186–407 form the RMT2 domain; sequence TAADQATYLK…YYYHPEIRFA (222 aa). Residues Tyr-193, Met-223, 246–251, 267–269, 294–295, and Asp-315 each bind S-adenosyl-L-methionine; these read FGMGII, EAH, and WQ.

This sequence belongs to the class I-like SAM-binding methyltransferase superfamily. RMT2 methyltransferase family. In terms of assembly, monomer.

Its subcellular location is the cytoplasm. The protein resides in the nucleus. Functionally, S-adenosyl-L-methionine-dependent protein-arginine N-methyltransferase that methylates the delta-nitrogen atom of arginine residues to form N5-methylarginine (type IV) in target proteins. Monomethylates ribosomal protein L12. The protein is Protein arginine N-methyltransferase 2 of Kluyveromyces lactis (strain ATCC 8585 / CBS 2359 / DSM 70799 / NBRC 1267 / NRRL Y-1140 / WM37) (Yeast).